The primary structure comprises 273 residues: Ribosomal RNA small subunit methyltransferase A (273 aa).

Asn-18, Leu-20, Gly-45, Glu-66, Asp-91, and Asn-113 together coordinate S-adenosyl-L-methionine.

The protein belongs to the class I-like SAM-binding methyltransferase superfamily. rRNA adenine N(6)-methyltransferase family. RsmA subfamily.

Its subcellular location is the cytoplasm. It carries out the reaction adenosine(1518)/adenosine(1519) in 16S rRNA + 4 S-adenosyl-L-methionine = N(6)-dimethyladenosine(1518)/N(6)-dimethyladenosine(1519) in 16S rRNA + 4 S-adenosyl-L-homocysteine + 4 H(+). Functionally, specifically dimethylates two adjacent adenosines (A1518 and A1519) in the loop of a conserved hairpin near the 3'-end of 16S rRNA in the 30S particle. May play a critical role in biogenesis of 30S subunits. In Escherichia coli (strain SE11), this protein is Ribosomal RNA small subunit methyltransferase A.